We begin with the raw amino-acid sequence, 387 residues long: Anhydro-N-acetylmuramic acid kinase (387 aa).

9-16 (GTSADGVD) provides a ligand contact to ATP.

This sequence belongs to the anhydro-N-acetylmuramic acid kinase family.

It catalyses the reaction 1,6-anhydro-N-acetyl-beta-muramate + ATP + H2O = N-acetyl-D-muramate 6-phosphate + ADP + H(+). It functions in the pathway amino-sugar metabolism; 1,6-anhydro-N-acetylmuramate degradation. Its pathway is cell wall biogenesis; peptidoglycan recycling. In terms of biological role, catalyzes the specific phosphorylation of 1,6-anhydro-N-acetylmuramic acid (anhMurNAc) with the simultaneous cleavage of the 1,6-anhydro ring, generating MurNAc-6-P. Is required for the utilization of anhMurNAc either imported from the medium or derived from its own cell wall murein, and thus plays a role in cell wall recycling. In Synechococcus sp. (strain WH7803), this protein is Anhydro-N-acetylmuramic acid kinase.